The chain runs to 193 residues: Probable DNA-directed RNA polymerase subunit delta (193 aa).

The 70-residue stretch at 14–83 folds into the HTH HARE-type domain; sequence LSMIEVARAI…GDNKWGLRSW (70 aa). Acidic residues-rich tracts occupy residues 119-133 and 143-193; these read EDAIDYNDDDPEDEN and YDND…ETND. A disordered region spans residues 119 to 193; it reads EDAIDYNDDD…DDDYEDETND (75 aa).

The protein belongs to the RpoE family. In terms of assembly, RNAP is composed of a core of 2 alpha, a beta and a beta' subunits. The core is associated with a delta subunit and one of several sigma factors.

In terms of biological role, participates in both the initiation and recycling phases of transcription. In the presence of the delta subunit, RNAP displays an increased specificity of transcription, a decreased affinity for nucleic acids, and an increased efficiency of RNA synthesis because of enhanced recycling. The chain is Probable DNA-directed RNA polymerase subunit delta from Streptococcus thermophilus (strain CNRZ 1066).